We begin with the raw amino-acid sequence, 1066 residues long: Isoleucine--tRNA ligase (1066 aa).

Positions 49-59 (PYVSGAIHLGT) match the 'HIGH' region motif. Residues 625-629 (KMSKS) carry the 'KMSKS' region motif. Lys628 provides a ligand contact to ATP.

The protein belongs to the class-I aminoacyl-tRNA synthetase family. IleS type 2 subfamily. Monomer. Zn(2+) is required as a cofactor.

The protein resides in the cytoplasm. The enzyme catalyses tRNA(Ile) + L-isoleucine + ATP = L-isoleucyl-tRNA(Ile) + AMP + diphosphate. Catalyzes the attachment of isoleucine to tRNA(Ile). As IleRS can inadvertently accommodate and process structurally similar amino acids such as valine, to avoid such errors it has two additional distinct tRNA(Ile)-dependent editing activities. One activity is designated as 'pretransfer' editing and involves the hydrolysis of activated Val-AMP. The other activity is designated 'posttransfer' editing and involves deacylation of mischarged Val-tRNA(Ile). This chain is Isoleucine--tRNA ligase, found in Pyrococcus horikoshii (strain ATCC 700860 / DSM 12428 / JCM 9974 / NBRC 100139 / OT-3).